The following is a 321-amino-acid chain: Biotin synthase (321 aa).

Residues 45 to 274 form the Radical SAM core domain; the sequence is FHGNRVDLCS…GALIRLCGGR (230 aa). Residues cysteine 63, cysteine 67, and cysteine 70 each coordinate [4Fe-4S] cluster. Positions 139, 199, and 269 each coordinate [2Fe-2S] cluster.

This sequence belongs to the radical SAM superfamily. Biotin synthase family. In terms of assembly, homodimer. [4Fe-4S] cluster is required as a cofactor. The cofactor is [2Fe-2S] cluster.

It carries out the reaction (4R,5S)-dethiobiotin + (sulfur carrier)-SH + 2 reduced [2Fe-2S]-[ferredoxin] + 2 S-adenosyl-L-methionine = (sulfur carrier)-H + biotin + 2 5'-deoxyadenosine + 2 L-methionine + 2 oxidized [2Fe-2S]-[ferredoxin]. It functions in the pathway cofactor biosynthesis; biotin biosynthesis; biotin from 7,8-diaminononanoate: step 2/2. Catalyzes the conversion of dethiobiotin (DTB) to biotin by the insertion of a sulfur atom into dethiobiotin via a radical-based mechanism. The sequence is that of Biotin synthase from Pelotomaculum thermopropionicum (strain DSM 13744 / JCM 10971 / SI).